The chain runs to 144 residues: Maximins 3/H5 (144 aa).

The first 18 residues, 1-18 (MNFKYIFAVSFLIASAYA), serve as a signal peptide directing secretion. 2 consecutive propeptides follow at residues 19 to 43 (RSVQ…REIR) and 74 to 123 (TAEE…KEKR). The residue at position 143 (Leu143) is a Leucine amide.

The protein belongs to the bombinin family. In terms of tissue distribution, expressed by the skin glands.

The protein localises to the secreted. In terms of biological role, maximin-3 shows antibacterial activity against both Gram-positive and Gram-negative bacteria. It also shows antimicrobial activity against the fungus C.albicans, but not against A.flavus nor P.uticale. It has little hemolytic activity. It possess a significant cytotoxicity against tumor cell lines. It possess a significant anti-HIV activity. It shows high spermicidal activity. Maximin-H5 shows antibacterial activity only against the Gram-positive bacteria S.aureus. The other bacterial and fungal strains tested were resistant to it. The presence of metal ions, like Zn(2+) and Mg(2+), did not increase its antimicrobial potency. Does not show hemolytic activity (in a concentration up to 80 uM). The chain is Maximins 3/H5 from Bombina maxima (Giant fire-bellied toad).